The following is a 328-amino-acid chain: Palmitoyltransferase ZDHHC15A (328 aa).

Residues 1–14 are Cytoplasmic-facing; sequence MLLPACLRRCARLL. The chain crosses the membrane as a helical span at residues 15–35; that stretch reads FWIPVLVVIVVVMWSYYAYVV. At 36-48 the chain is on the lumenal side; that stretch reads HFCWILLSSATQR. A helical transmembrane segment spans residues 49–69; the sequence is VVFLCLFHLCFGMFSWSFWKA. Topologically, residues 70–166 are cytoplasmic; that stretch reads VSTPPSSPSV…NNCMGFSNYK (97 aa). The DHHC domain occupies 123 to 173; it reads RFCHHCQLIKPDRCHHCSVCQTCVLKMDHHCLWLNNCMGFSNYKFFMLFLL. Residues cysteine 125 and cysteine 128 each contribute to the Zn(2+) site. Lysine 132 is a substrate binding site. Residues histidine 138, cysteine 139, cysteine 142, cysteine 145, and histidine 152 each coordinate Zn(2+). Cysteine 153 (S-palmitoyl cysteine intermediate) is an active-site residue. Position 159 (cysteine 159) interacts with Zn(2+). The chain crosses the membrane as a helical span at residues 167 to 187; sequence FFMLFLLYSLLYCLLIVSTVT. Residues 188 to 206 are Lumenal-facing; the sequence is PTVIQLWRGRLFDSCVKLH. Residues 207–227 traverse the membrane as a helical segment; that stretch reads VLFLTLVSAIFAITLCFLLIF. At 228 to 328 the chain is on the cytoplasmic side; it reads HIWLLTSNKT…KEAAVTIAVD (101 aa).

Belongs to the DHHC palmitoyltransferase family. Autopalmitoylated (in vitro).

It is found in the golgi apparatus membrane. It localises to the postsynaptic density. It carries out the reaction L-cysteinyl-[protein] + hexadecanoyl-CoA = S-hexadecanoyl-L-cysteinyl-[protein] + CoA. The enzyme catalyses L-cysteinyl-[protein] + tetradecanoyl-CoA = S-tetradecanoyl-L-cysteinyl-[protein] + CoA. The catalysed reaction is L-cysteinyl-[protein] + octadecanoyl-CoA = S-octadecanoyl-L-cysteinyl-[protein] + CoA. Palmitoyltransferase that catalyzes the addition of palmitate onto various protein substrates. Has no stringent fatty acid selectivity and in addition to palmitate can also transfer onto target proteins myristate from tetradecanoyl-CoA and stearate from octadecanoyl-CoA. May thereby regulate target proteins association and localization to membranes. This Danio rerio (Zebrafish) protein is Palmitoyltransferase ZDHHC15A (zdhhc15a).